The chain runs to 315 residues: WD repeat domain-containing protein 83 (315 aa).

7 WD repeats span residues 23–62 (CGQGAVRAVRFNVDGNYCLTCGSDKTLKLWNPLRGTLLRT), 65–104 (GHGYEVLDAAGSFDNSSLCSGGGDKAVVLWDVASGQVVRK), 107–146 (GHAGKVNTVQFNEEATVILSGSIDSSIRCWDCRSRRPEPV), 151–188 (EARDGVSSVKVSDHEILAGSVDGRVRRYDLRMGQLFSD), 190–228 (VGSPITCTCFSRDGQCTLVSSLDSTLRLLDKDTGELLGE), 231–272 (GHKN…LALA), and 275–313 (VGSGVVQSLAYHPTEPCLLTAMGGSVQCWREEAYEAEDG).

The protein belongs to the WD repeat MORG1 family. In terms of assembly, interacts with EGLN3/PHD3. Interacts with ERK signaling proteins MAP2K1/MEK1, MAP2K2/MEK2, LAMTOR3, ARAF/Raf-1, MAPK1/ERK2 and MAPK3/ERK1. Identified in the spliceosome C complex. Interacts with PARD6B and CRB3. Interacts strongly with GTP-bound RRAGA but not with inactive GDP-bound. Interacts with p62/SQSTM1.

It is found in the cytoplasm. The protein resides in the lysosome. Its subcellular location is the nucleus. Molecular scaffold protein for various multimeric protein complexes. Acts as a module in the assembly of a multicomponent scaffold for the ERK pathway, linking ERK responses to specific agonists. At low concentrations it enhances ERK activation, whereas high concentrations lead to the inhibition of ERK activation. Also involved in response to hypoxia by acting as a negative regulator of HIF1A/HIF-1-alpha via its interaction with EGLN3/PHD3. May promote degradation of HIF1A. May act by recruiting signaling complexes to a specific upstream activator. May also be involved in pre-mRNA splicing. Participates in tight junction development by regulating apico-basal polarity, a key step in tissue development and organization. Mechanistically, regulates the translocation of PAR6-aPKC from the cytoplasm to the apical surface by acting as an adapter between PARD6B AND CRB3. Also acts as a negative regulator of mTORC1 under nutrient-rich conditions by binding to the active Rag GTPases to inhibit mTORC1 localization to the lysosome and phosphorylation of downstream targets. This facilitates constitutive basal autophagy during nutrient availability. In Homo sapiens (Human), this protein is WD repeat domain-containing protein 83 (WDR83).